The sequence spans 423 residues: Ferrochelatase, mitochondrial (423 aa).

A mitochondrion-targeting transit peptide spans 1-29 (MISRKIISTINSKTFYNKSLSYCTVNNNK). Cys-173 lines the [2Fe-2S] cluster pocket. Residues His-207 and Asp-380 contribute to the active site. 3 residues coordinate [2Fe-2S] cluster: Cys-401, Cys-404, and Cys-411.

The protein belongs to the ferrochelatase family. In terms of assembly, monomer. [2Fe-2S] cluster is required as a cofactor.

The protein localises to the mitochondrion inner membrane. It carries out the reaction heme b + 2 H(+) = protoporphyrin IX + Fe(2+). It functions in the pathway porphyrin-containing compound metabolism; protoheme biosynthesis; protoheme from protoporphyrin-IX: step 1/1. Catalyzes the ferrous insertion into protoporphyrin IX. The sequence is that of Ferrochelatase, mitochondrial (hemH) from Dictyostelium discoideum (Social amoeba).